Reading from the N-terminus, the 344-residue chain is Cyclin-G2 (344 aa).

Residues 301-313 (ESESEDSCEDMSC) are compositionally biased toward acidic residues. The segment at 301 to 320 (ESESEDSCEDMSCGEESLSS) is disordered.

It belongs to the cyclin family. Cyclin G subfamily. As to expression, high levels in cerebellum, thymus, spleen and prostate. Low levels in skeletal muscle.

The protein resides in the cytoplasm. May play a role in growth regulation and in negative regulation of cell cycle progression. In Homo sapiens (Human), this protein is Cyclin-G2 (CCNG2).